A 340-amino-acid polypeptide reads, in one-letter code: Sodium/bile acid cotransporter 7 (340 aa).

The Cytoplasmic portion of the chain corresponds to 1 to 10; that stretch reads MRLLERARKE. Residues 11-31 traverse the membrane as a helical segment; that stretch reads WFMVGIVVAIGAAKLEPSVGV. Topologically, residues 32–37 are extracellular; that stretch reads NGGPLK. A helical membrane pass occupies residues 38-58; it reads PEITVSYIAVATIFFNSGLSL. The Cytoplasmic segment spans residues 59 to 71; it reads KTEELTSALVHLR. Residues 72–92 form a helical membrane-spanning segment; sequence LHLFIQIFTLAFFPAAIWLFL. Residues 93–116 are Extracellular-facing; sequence QLLSVTSINEWLLKGLQTVGCMPP. The chain crosses the membrane as a helical span at residues 117–137; the sequence is PVSSAVILTKAVGGNEAAAIF. N138 is a topological domain (cytoplasmic). Residues 139–159 form a helical membrane-spanning segment; that stretch reads SAFGSFLGIVVTPVLLLLFLG. Residues 160-163 lie on the Extracellular side of the membrane; sequence SSSS. Residues 164 to 184 traverse the membrane as a helical segment; it reads VPFTSIFSQLFMTVVVPLVIG. At 185–201 the chain is on the cytoplasmic side; it reads QIVRRYIKDWLERKKPP. A helical transmembrane segment spans residues 202–222; the sequence is FGVVSSSVLLMIIYTTFCDTF. The Extracellular portion of the chain corresponds to 223 to 234; it reads SNPNIDLDKFSL. Residues 235–255 form a helical membrane-spanning segment; sequence ILILFIIVSVQLSFMLLTFIF. Over 256–270 the chain is Cytoplasmic; it reads STRNNSGFTPADTVA. A helical membrane pass occupies residues 271-291; sequence IIFCSTHKSLTLGIPMLKIVF. Topologically, residues 292-298 are extracellular; it reads AGHEHLS. A helical membrane pass occupies residues 299–319; that stretch reads LISVPLLIYHPAQILLGSVLV. Residues 320 to 340 lie on the Cytoplasmic side of the membrane; sequence PTIKSWMVSRQKGVKLTRPTV.

The protein belongs to the bile acid:sodium symporter (BASS) (TC 2.A.28) family. Expressed in heart, brain, colon, lung, liver, adrenal gland, stomach and ovary. Also expressed weakly in small intestine. Expressed in skeletal tissues.

It is found in the cell membrane. Its subcellular location is the endoplasmic reticulum membrane. The protein resides in the golgi apparatus membrane. Involved in teeth and skeletal development. Has an essential role in the biosynthesis and trafficking of glycosaminoglycans and glycoproteins to produce a proper functioning extracellular matrix. Required for extracellular matrix mineralization. Also involved in the regulation of cellular calcium homeostasis. Does not show transport activity towards bile acids or steroid sulfates (including taurocholate, cholate, chenodeoxycholate, estrone-3-sulfate, dehydroepiandrosterone sulfate (DHEAS) and pregnenolone sulfate). The chain is Sodium/bile acid cotransporter 7 (Slc10a7) from Mus musculus (Mouse).